A 380-amino-acid chain; its full sequence is 1-deoxy-D-xylulose 5-phosphate reductoisomerase (380 aa).

T9, G10, S11, V12, R36, and N117 together coordinate NADPH. K118 is a 1-deoxy-D-xylulose 5-phosphate binding site. E119 lines the NADPH pocket. D139 serves as a coordination point for Mn(2+). 1-deoxy-D-xylulose 5-phosphate is bound by residues S140, E141, S165, and H188. E141 provides a ligand contact to Mn(2+). G194 is a binding site for NADPH. 1-deoxy-D-xylulose 5-phosphate contacts are provided by S201, N206, K207, and E210. E210 serves as a coordination point for Mn(2+).

The protein belongs to the DXR family. It depends on Mg(2+) as a cofactor. Mn(2+) is required as a cofactor.

It catalyses the reaction 2-C-methyl-D-erythritol 4-phosphate + NADP(+) = 1-deoxy-D-xylulose 5-phosphate + NADPH + H(+). It participates in isoprenoid biosynthesis; isopentenyl diphosphate biosynthesis via DXP pathway; isopentenyl diphosphate from 1-deoxy-D-xylulose 5-phosphate: step 1/6. In terms of biological role, catalyzes the NADPH-dependent rearrangement and reduction of 1-deoxy-D-xylulose-5-phosphate (DXP) to 2-C-methyl-D-erythritol 4-phosphate (MEP). The sequence is that of 1-deoxy-D-xylulose 5-phosphate reductoisomerase from Aquifex aeolicus (strain VF5).